The sequence spans 338 residues: Malate dehydrogenase, mitochondrial (338 aa).

A mitochondrion-targeting transit peptide spans 1-24 (MLSALARPVGAALRRSFSTSAQNN). Residues 31 to 37 (GASGGIG) and D57 each bind NAD(+). An O-linked (GlcNAc) serine glycan is attached at S33. 2 positions are modified to N6-acetyllysine; alternate: K78 and K91. N6-succinyllysine; alternate occurs at positions 78 and 91. Residues R104 and R110 each contribute to the substrate site. NAD(+) is bound by residues N117 and 140-142 (ISN). N142 provides a ligand contact to substrate. K165 is modified (N6-acetyllysine). R176 is a substrate binding site. At K185 the chain carries N6-acetyllysine; alternate. Position 185 is an N6-succinyllysine; alternate (K185). The active-site Proton acceptor is H200. The residue at position 203 (K203) is an N6-succinyllysine. K215 and K239 each carry N6-acetyllysine; alternate. 2 positions are modified to N6-succinyllysine; alternate: K215 and K239. An N6-malonyllysine; alternate modification is found at K239. S246 carries the post-translational modification Phosphoserine. M251 contacts NAD(+). K269 carries the N6-succinyllysine modification. An N6-acetyllysine; alternate mark is found at K296, K301, K307, K314, and K324. K296, K301, K307, K314, and K324 each carry N6-succinyllysine; alternate. At K307 the chain carries N6-malonyllysine; alternate. Phosphoserine is present on S326. N6-acetyllysine; alternate is present on residues K328, K329, and K335. K328 carries the N6-succinyllysine; alternate modification. At K329 the chain carries N6-malonyllysine; alternate. Position 335 is an N6-succinyllysine; alternate (K335).

It belongs to the LDH/MDH superfamily. MDH type 1 family. Homodimer. In terms of processing, acetylation is enhanced after treatment either with trichostin A (TCA) or with nicotinamide (NAM) with the appearance of tri- and tetraacetylations. Glucose also increases acetylation. In terms of tissue distribution, expressed in flagella of epididymal sperm.

The protein localises to the mitochondrion matrix. It carries out the reaction (S)-malate + NAD(+) = oxaloacetate + NADH + H(+). Enzyme activity is enhanced by acetylation. In Rattus norvegicus (Rat), this protein is Malate dehydrogenase, mitochondrial (Mdh2).